We begin with the raw amino-acid sequence, 194 residues long: Der GTPase-activating protein YihI (194 aa).

The interval 1-87 is disordered; the sequence is MSRQKKSRNI…RDPRLGSRKK (87 aa). A compositionally biased stretch (basic and acidic residues) spans 37–48; that stretch reads TRYELDAKARED.

This sequence belongs to the YihI family. As to quaternary structure, interacts with Der.

In terms of biological role, a GTPase-activating protein (GAP) that modifies Der/EngA GTPase function. May play a role in ribosome biogenesis. The sequence is that of Der GTPase-activating protein YihI from Mannheimia succiniciproducens (strain KCTC 0769BP / MBEL55E).